Here is a 344-residue protein sequence, read N- to C-terminus: Anthranilate phosphoribosyltransferase (344 aa).

Residues Gly-83, 86-87 (GD), Thr-91, 93-96 (NIST), 111-119 (KHGGRSVSS), and Ser-123 each bind 5-phospho-alpha-D-ribose 1-diphosphate. Gly-83 is a binding site for anthranilate. Ser-95 is a binding site for Mg(2+). Arg-169 contacts anthranilate. Mg(2+) is bound by residues Asp-228 and Glu-229.

This sequence belongs to the anthranilate phosphoribosyltransferase family. In terms of assembly, homodimer. It depends on Mg(2+) as a cofactor.

It catalyses the reaction N-(5-phospho-beta-D-ribosyl)anthranilate + diphosphate = 5-phospho-alpha-D-ribose 1-diphosphate + anthranilate. The protein operates within amino-acid biosynthesis; L-tryptophan biosynthesis; L-tryptophan from chorismate: step 2/5. Catalyzes the transfer of the phosphoribosyl group of 5-phosphorylribose-1-pyrophosphate (PRPP) to anthranilate to yield N-(5'-phosphoribosyl)-anthranilate (PRA). In Methylibium petroleiphilum (strain ATCC BAA-1232 / LMG 22953 / PM1), this protein is Anthranilate phosphoribosyltransferase.